The chain runs to 222 residues: Thiol:disulfide interchange protein DsbL (222 aa).

The first 27 residues, methionine 1–alanine 27, serve as a signal peptide directing secretion. The region spanning phenylalanine 28–serine 221 is the Thioredoxin domain. The cysteines at positions 56 and 59 are disulfide-linked.

The protein belongs to the thioredoxin family. DsbL subfamily. In terms of assembly, interacts with DsbI.

The protein resides in the periplasm. Involved in disulfide-bond formation. Acts by transferring its disulfide bond to other proteins. Part of a redox system composed of DsbI and DsbL that mediates formation of an essential disulfide bond in AssT. This is Thiol:disulfide interchange protein DsbL from Escherichia coli O6:H1 (strain CFT073 / ATCC 700928 / UPEC).